The chain runs to 360 residues: Phospho-N-acetylmuramoyl-pentapeptide-transferase (360 aa).

Transmembrane regions (helical) follow at residues 25–45, 73–93, 97–117, 132–152, 168–188, 199–219, 236–256, 263–283, 288–308, and 338–358; these read RGIL…PWMI, TMGG…WADL, YVWV…VDDY, WKYF…YMTA, VSIP…VGSS, GLAI…CYLS, AGEL…FLWF, VFMG…IAVI, VVLF…IIQV, and VIVR…ATLK.

It belongs to the glycosyltransferase 4 family. MraY subfamily. The cofactor is Mg(2+).

The protein localises to the cell inner membrane. The catalysed reaction is UDP-N-acetyl-alpha-D-muramoyl-L-alanyl-gamma-D-glutamyl-meso-2,6-diaminopimeloyl-D-alanyl-D-alanine + di-trans,octa-cis-undecaprenyl phosphate = di-trans,octa-cis-undecaprenyl diphospho-N-acetyl-alpha-D-muramoyl-L-alanyl-D-glutamyl-meso-2,6-diaminopimeloyl-D-alanyl-D-alanine + UMP. It participates in cell wall biogenesis; peptidoglycan biosynthesis. Functionally, catalyzes the initial step of the lipid cycle reactions in the biosynthesis of the cell wall peptidoglycan: transfers peptidoglycan precursor phospho-MurNAc-pentapeptide from UDP-MurNAc-pentapeptide onto the lipid carrier undecaprenyl phosphate, yielding undecaprenyl-pyrophosphoryl-MurNAc-pentapeptide, known as lipid I. This chain is Phospho-N-acetylmuramoyl-pentapeptide-transferase, found in Ectopseudomonas mendocina (strain ymp) (Pseudomonas mendocina).